A 443-amino-acid polypeptide reads, in one-letter code: Thymidine phosphorylase (443 aa).

This sequence belongs to the thymidine/pyrimidine-nucleoside phosphorylase family. As to quaternary structure, homodimer.

It carries out the reaction thymidine + phosphate = 2-deoxy-alpha-D-ribose 1-phosphate + thymine. It participates in pyrimidine metabolism; dTMP biosynthesis via salvage pathway; dTMP from thymine: step 1/2. The enzymes which catalyze the reversible phosphorolysis of pyrimidine nucleosides are involved in the degradation of these compounds and in their utilization as carbon and energy sources, or in the rescue of pyrimidine bases for nucleotide synthesis. The sequence is that of Thymidine phosphorylase from Shewanella denitrificans (strain OS217 / ATCC BAA-1090 / DSM 15013).